Reading from the N-terminus, the 254-residue chain is Small ribosomal subunit protein uS2 (254 aa).

Belongs to the universal ribosomal protein uS2 family.

The polypeptide is Small ribosomal subunit protein uS2 (Legionella pneumophila (strain Lens)).